A 238-amino-acid chain; its full sequence is RAD9, HUS1, RAD1-interacting nuclear orphan protein 1 (238 aa).

The segment covering 1 to 10 (MPPRKKRRQP) has biased composition (basic residues). Residues 1 to 31 (MPPRKKRRQPSQKAPLLFHQQPLEGPKHSCA) are disordered. S51 is subject to Phosphoserine; by PLK1. Positions 55–61 (SWVSPDF) match the RAD1-binding motif motif. The tract at residues 74 to 105 (KHQNRARHSSRKPTTSKFPHLTFESPQSSSSE) is disordered. The segment covering 75 to 84 (HQNRARHSSR) has biased composition (basic residues). The short motif at 125–132 (RRPLVPVL) is the D-box element. The short motif at 174–178 (QKENS) is the KEN box element.

In terms of assembly, interacts (when phosphorylated by PLK1) with POLQ; promoting POLQ recruitment to DNA damage sites. Interacts with RAD1; interaction is direct and promotes association with the 9-1-1 (RAD9-RAD1-HUS1) complex. Interacts with RAD18. Interacts with TOPBP1. Interacts with UBE2N. Phosphorylated at Ser-51 by PLK1, promoting interaction with polymerase theta (POLQ). Post-translationally, ubiquitinated and degraded by the APC/C complex upon mitotic exit. In terms of tissue distribution, weakly expressed in testis, prostate, ovary, thymus and small intestine. Expressed strongly in breast cancer cells.

The protein resides in the nucleus. It is found in the chromosome. Its function is as follows. Involved in microhomology-mediated end-joining (MMEJ) DNA repair by promoting recruitment of polymerase theta (POLQ) to DNA damage sites during mitosis. MMEJ is an alternative non-homologous end-joining (NHEJ) machinery that takes place during mitosis to repair double-strand breaks in DNA that originate in S-phase. Accumulates in M-phase; following phosphorylation by PLK1, interacts with POLQ, enabling its recruitment to double-strand breaks for subsequent repair. Also involved in the DNA damage response (DDR) signaling in response to genotoxic stresses such as ionizing radiation (IR) during the S phase. Recruited to sites of DNA damage through interaction with the 9-1-1 cell-cycle checkpoint response complex and TOPBP1 in a ATR-dependent manner. Required for the progression of the G1 to S phase transition. Plays a role in the stimulation of CHEK1 phosphorylation. This Homo sapiens (Human) protein is RAD9, HUS1, RAD1-interacting nuclear orphan protein 1.